The chain runs to 51 residues: Sperm protamine P1 (51 aa).

2 disulfide bridges follow: Cys-7–Cys-15 and Cys-40–Cys-48.

This sequence belongs to the protamine P1 family. Cross-linked by interchain disulfide bonds around the DNA-helix. Phosphorylated by SRPK1. As to expression, testis.

The protein resides in the nucleus. It localises to the chromosome. Functionally, protamines substitute for histones in the chromatin of sperm during the haploid phase of spermatogenesis. They compact sperm DNA into a highly condensed, stable and inactive complex. The protein is Sperm protamine P1 (PRM1) of Bos taurus (Bovine).